Reading from the N-terminus, the 405-residue chain is Argininosuccinate synthase (405 aa).

Residues 10–18 (AFSGGLDTS) and Ala-37 each bind ATP. 2 residues coordinate L-citrulline: Tyr-90 and Ser-95. Gly-120 provides a ligand contact to ATP. 3 residues coordinate L-aspartate: Thr-122, Asn-126, and Asp-127. An L-citrulline-binding site is contributed by Asn-126. L-citrulline-binding residues include Arg-130, Ser-181, Ser-190, Glu-266, and Tyr-278.

It belongs to the argininosuccinate synthase family. Type 1 subfamily. Homotetramer.

Its subcellular location is the cytoplasm. The catalysed reaction is L-citrulline + L-aspartate + ATP = 2-(N(omega)-L-arginino)succinate + AMP + diphosphate + H(+). It functions in the pathway amino-acid biosynthesis; L-arginine biosynthesis; L-arginine from L-ornithine and carbamoyl phosphate: step 2/3. In Rhizorhabdus wittichii (strain DSM 6014 / CCUG 31198 / JCM 15750 / NBRC 105917 / EY 4224 / RW1) (Sphingomonas wittichii), this protein is Argininosuccinate synthase.